The primary structure comprises 133 residues: UPF0102 protein ABSDF1354 (133 aa).

It belongs to the UPF0102 family.

The sequence is that of UPF0102 protein ABSDF1354 from Acinetobacter baumannii (strain SDF).